We begin with the raw amino-acid sequence, 330 residues long: tRNA-modifying protein YgfZ (330 aa).

Positions 28 and 190 each coordinate folate.

It belongs to the tRNA-modifying YgfZ family.

It localises to the cytoplasm. In terms of biological role, folate-binding protein involved in regulating the level of ATP-DnaA and in the modification of some tRNAs. It is probably a key factor in regulatory networks that act via tRNA modification, such as initiation of chromosomal replication. This is tRNA-modifying protein YgfZ from Yersinia pestis bv. Antiqua (strain Antiqua).